We begin with the raw amino-acid sequence, 206 residues long: Thiamine-phosphate synthase (206 aa).

4-amino-2-methyl-5-(diphosphooxymethyl)pyrimidine-binding positions include 36 to 40 and asparagine 68; that span reads QLRAK. Residues aspartate 69 and aspartate 88 each coordinate Mg(2+). Serine 105 provides a ligand contact to 4-amino-2-methyl-5-(diphosphooxymethyl)pyrimidine. 131-133 is a binding site for 2-[(2R,5Z)-2-carboxy-4-methylthiazol-5(2H)-ylidene]ethyl phosphate; sequence TPT. Lysine 134 contacts 4-amino-2-methyl-5-(diphosphooxymethyl)pyrimidine. Glycine 162 serves as a coordination point for 2-[(2R,5Z)-2-carboxy-4-methylthiazol-5(2H)-ylidene]ethyl phosphate.

It belongs to the thiamine-phosphate synthase family. It depends on Mg(2+) as a cofactor.

The catalysed reaction is 2-[(2R,5Z)-2-carboxy-4-methylthiazol-5(2H)-ylidene]ethyl phosphate + 4-amino-2-methyl-5-(diphosphooxymethyl)pyrimidine + 2 H(+) = thiamine phosphate + CO2 + diphosphate. The enzyme catalyses 2-(2-carboxy-4-methylthiazol-5-yl)ethyl phosphate + 4-amino-2-methyl-5-(diphosphooxymethyl)pyrimidine + 2 H(+) = thiamine phosphate + CO2 + diphosphate. It carries out the reaction 4-methyl-5-(2-phosphooxyethyl)-thiazole + 4-amino-2-methyl-5-(diphosphooxymethyl)pyrimidine + H(+) = thiamine phosphate + diphosphate. The protein operates within cofactor biosynthesis; thiamine diphosphate biosynthesis; thiamine phosphate from 4-amino-2-methyl-5-diphosphomethylpyrimidine and 4-methyl-5-(2-phosphoethyl)-thiazole: step 1/1. Functionally, condenses 4-methyl-5-(beta-hydroxyethyl)thiazole monophosphate (THZ-P) and 2-methyl-4-amino-5-hydroxymethyl pyrimidine pyrophosphate (HMP-PP) to form thiamine monophosphate (TMP). The protein is Thiamine-phosphate synthase of Thermus thermophilus (strain ATCC BAA-163 / DSM 7039 / HB27).